The chain runs to 174 residues: Urease accessory protein UreE (174 aa).

Residues 146-174 form a disordered region; that stretch reads NGAYATGGHAHDHDGEPEHVHGPGCQHAH. Residues 154-166 are compositionally biased toward basic and acidic residues; it reads HAHDHDGEPEHVH.

The protein belongs to the UreE family.

It is found in the cytoplasm. Its function is as follows. Involved in urease metallocenter assembly. Binds nickel. Probably functions as a nickel donor during metallocenter assembly. This is Urease accessory protein UreE from Albidiferax ferrireducens (strain ATCC BAA-621 / DSM 15236 / T118) (Rhodoferax ferrireducens).